A 311-amino-acid polypeptide reads, in one-letter code: tRNA dimethylallyltransferase (311 aa).

11-18 (GPTASGKS) provides a ligand contact to ATP. Residue 13 to 18 (TASGKS) participates in substrate binding. Interaction with substrate tRNA stretches follow at residues 36–39 (DSMQ) and 160–164 (QRLIR).

The protein belongs to the IPP transferase family. Monomer. It depends on Mg(2+) as a cofactor.

The catalysed reaction is adenosine(37) in tRNA + dimethylallyl diphosphate = N(6)-dimethylallyladenosine(37) in tRNA + diphosphate. In terms of biological role, catalyzes the transfer of a dimethylallyl group onto the adenine at position 37 in tRNAs that read codons beginning with uridine, leading to the formation of N6-(dimethylallyl)adenosine (i(6)A). This chain is tRNA dimethylallyltransferase, found in Rickettsia prowazekii (strain Madrid E).